The sequence spans 357 residues: Alanine racemase (357 aa).

Residue Lys-34 is the Proton acceptor; specific for D-alanine of the active site. Lys-34 carries the post-translational modification N6-(pyridoxal phosphate)lysine. Arg-129 is a substrate binding site. Tyr-254 (proton acceptor; specific for L-alanine) is an active-site residue. Met-302 serves as a coordination point for substrate.

The protein belongs to the alanine racemase family. Pyridoxal 5'-phosphate serves as cofactor.

It catalyses the reaction L-alanine = D-alanine. Its pathway is amino-acid biosynthesis; D-alanine biosynthesis; D-alanine from L-alanine: step 1/1. Its function is as follows. Catalyzes the interconversion of L-alanine and D-alanine. Likely plays an important role in supplying D-alanine, which is an indispensable constituent in the biosynthesis of bacterial cell-wall peptidoglycan. This Aeromonas hydrophila subsp. hydrophila (strain ATCC 7966 / DSM 30187 / BCRC 13018 / CCUG 14551 / JCM 1027 / KCTC 2358 / NCIMB 9240 / NCTC 8049) protein is Alanine racemase.